The sequence spans 128 residues: Cytochrome c' (128 aa).

Heme c-binding residues include Gln-13, Gln-17, Glu-69, Thr-70, Cys-118, Cys-121, and His-122.

Homodimer. Post-translationally, binds 1 heme c group covalently per subunit.

Cytochrome c' is the most widely occurring bacterial c-type cytochrome. Cytochromes c' are high-spin proteins and the heme has no sixth ligand. Their exact function is not known. The polypeptide is Cytochrome c' (Magnetospirillum molischianum (Rhodospirillum molischianum)).